The chain runs to 288 residues: DegV domain-containing protein MYPU_3590 (288 aa).

Positions 3-275 (IAIVIDSSSG…LGAIAISLVK (273 aa)) constitute a DegV domain. Hexadecanoate-binding residues include Ser-61 and Ser-92.

Its function is as follows. May bind long-chain fatty acids, such as palmitate, and may play a role in lipid transport or fatty acid metabolism. The protein is DegV domain-containing protein MYPU_3590 of Mycoplasmopsis pulmonis (strain UAB CTIP) (Mycoplasma pulmonis).